A 279-amino-acid chain; its full sequence is Proteasome subunit beta (279 aa).

Residues 1 to 56 (MASQAMSWRGEGERVVRDLAAASTSSFVEHLSQSRPDLLPFGQALPAGVLPQTPHA) constitute a propeptide, removed in mature form; by autocatalysis. The active-site Nucleophile is the threonine 57.

It belongs to the peptidase T1B family. The 20S proteasome core is composed of 14 alpha and 14 beta subunits that assemble into four stacked heptameric rings, resulting in a barrel-shaped structure. The two inner rings, each composed of seven catalytic beta subunits, are sandwiched by two outer rings, each composed of seven alpha subunits. The catalytic chamber with the active sites is on the inside of the barrel. Has a gated structure, the ends of the cylinder being occluded by the N-termini of the alpha-subunits. Is capped by the proteasome-associated ATPase, ARC.

It localises to the cytoplasm. The catalysed reaction is Cleavage of peptide bonds with very broad specificity.. It functions in the pathway protein degradation; proteasomal Pup-dependent pathway. The formation of the proteasomal ATPase ARC-20S proteasome complex, likely via the docking of the C-termini of ARC into the intersubunit pockets in the alpha-rings, may trigger opening of the gate for substrate entry. Interconversion between the open-gate and close-gate conformations leads to a dynamic regulation of the 20S proteasome proteolysis activity. Functionally, component of the proteasome core, a large protease complex with broad specificity involved in protein degradation. This Renibacterium salmoninarum (strain ATCC 33209 / DSM 20767 / JCM 11484 / NBRC 15589 / NCIMB 2235) protein is Proteasome subunit beta.